Reading from the N-terminus, the 483-residue chain is Sphingomyelin synthase-related 1 (483 aa).

Helical transmembrane passes span 182–202 (LIAF…MVLV), 230–250 (FDMC…VLFF), and 261–281 (MFSL…ITSL). Histidine 330 is a catalytic residue. Residues 349 to 369 (WTGLHTFTWVLNCFAIFLILA) form a helical membrane-spanning segment. Active-site residues include histidine 373 and aspartate 377. A helical transmembrane segment spans residues 376 to 396 (IDVFIAFYISSRMFLYYHAYA). Residues 397–483 (YNHAGITATD…NSKNHTKKHN (87 aa)) lie on the Cytoplasmic side of the membrane. A compositionally biased stretch (basic and acidic residues) spans 450 to 461 (EPKITPKSDSSR). The tract at residues 450-483 (EPKITPKSDSSRKRSSVVAAKQNGNSKNHTKKHN) is disordered.

Belongs to the sphingomyelin synthase family.

Its subcellular location is the membrane. This chain is Sphingomyelin synthase-related 1, found in Caenorhabditis elegans.